Reading from the N-terminus, the 462-residue chain is Citrate synthase, mitochondrial (462 aa).

The transit peptide at 1 to 21 (MRSINQLLKQASLSQKSQYNF) directs the protein to the mitochondrion. Active-site residues include H300, H346, and D401.

The protein belongs to the citrate synthase family. In terms of assembly, homodimer.

Its subcellular location is the mitochondrion matrix. It is found in the cytoplasm. The protein resides in the cytoskeleton. The catalysed reaction is oxaloacetate + acetyl-CoA + H2O = citrate + CoA + H(+). It participates in carbohydrate metabolism; tricarboxylic acid cycle; isocitrate from oxaloacetate: step 1/2. Its function is as follows. Structural protein involved in oral morphogenesis and in pronuclear behavior during conjugation. Respiratory enzyme. In Tetrahymena thermophila, this protein is Citrate synthase, mitochondrial.